The primary structure comprises 438 residues: Trigger factor (438 aa).

One can recognise a PPIase FKBP-type domain in the interval 162-247 (GDRVNINYQG…LNKVEAPKLP (86 aa)).

It belongs to the FKBP-type PPIase family. Tig subfamily.

The protein resides in the cytoplasm. The enzyme catalyses [protein]-peptidylproline (omega=180) = [protein]-peptidylproline (omega=0). In terms of biological role, involved in protein export. Acts as a chaperone by maintaining the newly synthesized protein in an open conformation. Functions as a peptidyl-prolyl cis-trans isomerase. This chain is Trigger factor, found in Nitrosomonas eutropha (strain DSM 101675 / C91 / Nm57).